A 266-amino-acid chain; its full sequence is Gap junction beta-4 protein (266 aa).

An intramembrane segment occupies 2 to 13 (NWAFLQGLLSGV). The Cytoplasmic segment spans residues 14 to 20 (NKYSTVL). Residues 21-40 (SRIWLSVVFIFRVLVYVVAA) traverse the membrane as a helical segment. Topologically, residues 41-73 (EEVWDDEQKDFVCNTKQPGCPNVCYDEFFPVSH) are extracellular. 3 cysteine pairs are disulfide-bonded: C53-C175, C60-C169, and C64-C164. A helical transmembrane segment spans residues 74 to 94 (VRLWALQLILVTCPSLLVVMH). The Cytoplasmic segment spans residues 95 to 130 (VAYREERERKHHLKHGPNAPSLYDNLSKKRGGLWWT). A helical transmembrane segment spans residues 131-151 (YLLSLIFKAAVDAGFLYIFHR). The Extracellular portion of the chain corresponds to 152–184 (LYKDYDMPRVVACSVEPCPHTVDCYISRPTEKK). The helical transmembrane segment at 185–205 (VFTYFMVTTAAICILLNLSEV) threads the bilayer. The Cytoplasmic segment spans residues 206–266 (FYLVGKRCME…SAPVDAGGYP (61 aa)).

It belongs to the connexin family. Beta-type (group I) subfamily. A hemichannel or connexon is composed of a hexamer of connexins. A functional gap junction is formed by the apposition of two hemichannels. Forms heteromeric channels with GJB2.

The protein localises to the cell membrane. The protein resides in the cell junction. It localises to the gap junction. Structural component of gap junctions. Gap junctions are dodecameric channels that connect the cytoplasm of adjoining cells. They are formed by the docking of two hexameric hemichannels, one from each cell membrane. Small molecules and ions diffuse from one cell to a neighboring cell via the central pore. The polypeptide is Gap junction beta-4 protein (GJB4) (Homo sapiens (Human)).